We begin with the raw amino-acid sequence, 313 residues long: Aspartoacylase (313 aa).

Zn(2+) contacts are provided by H21 and E24. R63, N70, and R71 together coordinate N-acetyl-L-aspartate. A Zn(2+)-binding site is contributed by H116. N-acetyl-L-aspartate is bound by residues Y164 and R168. E178 serves as the catalytic Proton donor/acceptor. Y288 is a binding site for N-acetyl-L-aspartate.

This sequence belongs to the AspA/AstE family. Aspartoacylase subfamily. As to quaternary structure, homodimer. It depends on Zn(2+) as a cofactor.

The protein resides in the cytoplasm. Its subcellular location is the nucleus. It carries out the reaction an N-acyl-L-aspartate + H2O = a carboxylate + L-aspartate. The catalysed reaction is N-acetyl-L-aspartate + H2O = L-aspartate + acetate. Functionally, catalyzes the deacetylation of N-acetylaspartic acid (NAA) to produce acetate and L-aspartate. NAA occurs in high concentration in brain and its hydrolysis NAA plays a significant part in the maintenance of intact white matter. In other tissues it acts as a scavenger of NAA from body fluids. The sequence is that of Aspartoacylase from Pongo abelii (Sumatran orangutan).